A 148-amino-acid polypeptide reads, in one-letter code: Large ribosomal subunit protein bL9 (148 aa).

This sequence belongs to the bacterial ribosomal protein bL9 family.

Its function is as follows. Binds to the 23S rRNA. This chain is Large ribosomal subunit protein bL9, found in Bifidobacterium longum (strain DJO10A).